A 426-amino-acid chain; its full sequence is GATA type zinc finger protein asd-4 (426 aa).

The segment at 16 to 40 adopts a GATA-type zinc-finger fold; that stretch reads CQNCATSTTPLWRRDEMGQVLCNAC. Disordered stretches follow at residues 70–143 and 159–178; these read RPDL…NPHI and PGFGVPTASPGRAPSPMNGE. The span at 104 to 113 shows a compositional bias: low complexity; that stretch reads PNNPAAAARR. Positions 128–138 are enriched in polar residues; it reads SPVSRTGTPNV. Residues 182–292 are a coiled coil; that stretch reads QTHEQLLAAN…QDNGRHKKIR (111 aa). A compositionally biased stretch (low complexity) spans 306–318; it reads VEPQQPEQQQPAP. Residues 306 to 426 form a disordered region; that stretch reads VEPQQPEQQQ…PVEEAPKAES (121 aa). Positions 335 to 353 are enriched in pro residues; it reads APAPAPEAAPEQAPAPAPE. Residues 354–419 show a composition bias toward low complexity; it reads PVQEQAQEPE…SEPPTTAPVE (66 aa).

In terms of assembly, homotetramer.

The protein resides in the nucleus. In terms of biological role, transcriptional regulator that functions in sexual development; disruption of asd-4 gene results in agenesis of ascus and ascospore with macroscopically normal fruiting body formation. The GATA-type zinc finger domain binds to DNA sequences from its own promoter region. The sequence is that of GATA type zinc finger protein asd-4 (asd-4) from Neurospora crassa (strain ATCC 24698 / 74-OR23-1A / CBS 708.71 / DSM 1257 / FGSC 987).